Consider the following 270-residue polypeptide: 26S proteasome regulatory subunit rpn12 (270 aa).

The region spanning 65–237 (CDIESFARYA…LETEDGMLID (173 aa)) is the PCI domain.

Belongs to the proteasome subunit S14 family.

Acts as a regulatory subunit of the 26S proteasome which is involved in the ATP-dependent degradation of ubiquitinated proteins. This is 26S proteasome regulatory subunit rpn12 (rpn12) from Schizosaccharomyces pombe (strain 972 / ATCC 24843) (Fission yeast).